The sequence spans 49 residues: Large ribosomal subunit protein bL33B (49 aa).

It belongs to the bacterial ribosomal protein bL33 family.

This Lactococcus lactis subsp. cremoris (Streptococcus cremoris) protein is Large ribosomal subunit protein bL33B (rpmG2).